Reading from the N-terminus, the 438-residue chain is Terminase, large subunit (438 aa).

Residues serine 62–serine 68 carry the Walker A motif motif. A Walker B motif motif is present at residues phenylalanine 150 to glutamate 155. Residue glutamate 155 is the For ATPase activity of the active site. Residues aspartate 286, aspartate 342, and aspartate 418 each contribute to the Mg(2+) site.

The protein belongs to the Tequatrovirus large terminase family. In terms of assembly, interacts with the terminase small subunit; the active complex is probably heterooligomeric. Interacts with the portal protein. It depends on Mg(2+) as a cofactor.

In terms of biological role, the terminase large subunit acts as an ATP driven molecular motor necessary for viral DNA translocation into empty capsids and as an endonuclease that cuts the viral genome to initiate and to end a packaging reaction The terminase lies at a unique vertex of the procapsid and is composed of two subunits, a small terminase subunit involved in viral DNA recognition (packaging sequence), and a large terminase subunit possessing endonucleolytic and ATPase activities. Both terminase subunits heterooligomerize and are docked on the portal protein to form the packaging machine. The terminase large subunit exhibits endonuclease activity and cleaves the viral genome concatemer. Direct long terminal repeats at each end of the genome are duplicated in concert with packaging. Once the capsid is packaged with the DNA, the terminase complex is substituted by the tail. The sequence is that of Terminase, large subunit from Escherichia phage T5 (Enterobacteria phage T5).